The chain runs to 844 residues: DNA mismatch repair protein MutS (844 aa).

610 to 617 (GPNMGGKS) is a binding site for ATP.

The protein belongs to the DNA mismatch repair MutS family.

In terms of biological role, this protein is involved in the repair of mismatches in DNA. It is possible that it carries out the mismatch recognition step. This protein has a weak ATPase activity. In Francisella tularensis subsp. mediasiatica (strain FSC147), this protein is DNA mismatch repair protein MutS.